The following is a 412-amino-acid chain: Mannose-6-phosphate isomerase (412 aa).

Positions 99, 101, 126, and 265 each coordinate Zn(2+). Arginine 284 is a catalytic residue.

It belongs to the mannose-6-phosphate isomerase type 1 family. It depends on Zn(2+) as a cofactor.

Its subcellular location is the cytoplasm. The protein localises to the nucleus. The enzyme catalyses D-mannose 6-phosphate = D-fructose 6-phosphate. It functions in the pathway nucleotide-sugar biosynthesis; GDP-alpha-D-mannose biosynthesis; alpha-D-mannose 1-phosphate from D-fructose 6-phosphate: step 1/2. Involved in the synthesis of the GDP-mannose and dolichol-phosphate-mannose required for a number of critical mannosyl transfer reactions. The chain is Mannose-6-phosphate isomerase (pmi40) from Schizosaccharomyces pombe (strain 972 / ATCC 24843) (Fission yeast).